A 165-amino-acid chain; its full sequence is V-type proton ATPase 16 kDa proteolipid subunit (165 aa).

Residues methionine 1–threonine 10 lie on the Lumenal side of the membrane. A helical membrane pass occupies residues alanine 11 to glycine 33. Residues threonine 34–serine 55 are Cytoplasmic-facing. A helical membrane pass occupies residues isoleucine 56 to isoleucine 76. At serine 77–histidine 95 the chain is on the lumenal side. A helical membrane pass occupies residues leucine 96–glycine 117. Topologically, residues aspartate 118–lysine 129 are cytoplasmic. The chain crosses the membrane as a helical span at residues leucine 130 to leucine 155. The Lumenal segment spans residues serine 156–aspartate 165.

Belongs to the V-ATPase proteolipid subunit family. As to quaternary structure, V-ATPase is a heteromultimeric enzyme composed of a peripheral catalytic V1 complex (main components: subunits A, B, C, D, E, and F) attached to an integral membrane V0 proton pore complex (main component: the proteolipid protein; which is present as a hexamer that forms the proton-conducting pore). Higher expression in leaves, followed by roots and weakly in flowers. Expression in leaves is light-dependent.

The protein resides in the vacuole membrane. Functionally, proton-conducting pore forming subunit of the membrane integral V0 complex of vacuolar ATPase. V-ATPase is responsible for acidifying a variety of intracellular compartments in eukaryotic cells. Necessary for the crassulacean acid metabolism. This is V-type proton ATPase 16 kDa proteolipid subunit from Kalanchoe daigremontiana (Devil's backbone).